We begin with the raw amino-acid sequence, 231 residues long: DNA mismatch repair protein MutH (231 aa).

The protein belongs to the MutH family.

The protein localises to the cytoplasm. Its function is as follows. Sequence-specific endonuclease that cleaves unmethylated GATC sequences. It is involved in DNA mismatch repair. This is DNA mismatch repair protein MutH from Salmonella paratyphi C (strain RKS4594).